The primary structure comprises 290 residues: 4-hydroxy-tetrahydrodipicolinate synthase (290 aa).

Threonine 44 lines the pyruvate pocket. The Proton donor/acceptor role is filled by tyrosine 132. The active-site Schiff-base intermediate with substrate is lysine 160. Isoleucine 202 contacts pyruvate.

It belongs to the DapA family. Homotetramer; dimer of dimers.

It localises to the cytoplasm. The catalysed reaction is L-aspartate 4-semialdehyde + pyruvate = (2S,4S)-4-hydroxy-2,3,4,5-tetrahydrodipicolinate + H2O + H(+). It participates in amino-acid biosynthesis; L-lysine biosynthesis via DAP pathway; (S)-tetrahydrodipicolinate from L-aspartate: step 3/4. Functionally, catalyzes the condensation of (S)-aspartate-beta-semialdehyde [(S)-ASA] and pyruvate to 4-hydroxy-tetrahydrodipicolinate (HTPA). The polypeptide is 4-hydroxy-tetrahydrodipicolinate synthase (Ruegeria pomeroyi (strain ATCC 700808 / DSM 15171 / DSS-3) (Silicibacter pomeroyi)).